A 262-amino-acid polypeptide reads, in one-letter code: Putative cysteine-rich repeat secretory protein 24 (262 aa).

A signal peptide spans 1 to 29 (MSLSSSVTKHLISASILAIVAMQLPSVHS). Gnk2-homologous domains are found at residues 39–141 (YLHH…SIYT) and 147–259 (YKNN…LYPF).

It belongs to the cysteine-rich repeat secretory protein family.

It localises to the secreted. In Arabidopsis thaliana (Mouse-ear cress), this protein is Putative cysteine-rich repeat secretory protein 24 (CRRSP24).